The chain runs to 451 residues: UDP-N-acetylmuramoylalanine--D-glutamate ligase (451 aa).

119 to 125 (GSNGKTT) contacts ATP.

The protein belongs to the MurCDEF family.

It localises to the cytoplasm. The catalysed reaction is UDP-N-acetyl-alpha-D-muramoyl-L-alanine + D-glutamate + ATP = UDP-N-acetyl-alpha-D-muramoyl-L-alanyl-D-glutamate + ADP + phosphate + H(+). Its pathway is cell wall biogenesis; peptidoglycan biosynthesis. In terms of biological role, cell wall formation. Catalyzes the addition of glutamate to the nucleotide precursor UDP-N-acetylmuramoyl-L-alanine (UMA). The sequence is that of UDP-N-acetylmuramoylalanine--D-glutamate ligase from Geobacillus kaustophilus (strain HTA426).